Consider the following 230-residue polypeptide: Thymidylate kinase (230 aa).

20-27 (GGEGSGKS) lines the ATP pocket.

This sequence belongs to the thymidylate kinase family.

The catalysed reaction is dTMP + ATP = dTDP + ADP. In terms of biological role, phosphorylation of dTMP to form dTDP in both de novo and salvage pathways of dTTP synthesis. The sequence is that of Thymidylate kinase from Nitrobacter winogradskyi (strain ATCC 25391 / DSM 10237 / CIP 104748 / NCIMB 11846 / Nb-255).